Reading from the N-terminus, the 62-residue chain is MTTAFQFALFALIATSFLLVVGVPVAFASPGGWSDNKNIVFSGASLWIGLVFLVGIPNSFIS.

The next 2 membrane-spanning stretches (helical) occupy residues 8–28 (ALFALIATSFLLVVGVPVAFA) and 41–61 (FSGASLWIGLVFLVGIPNSFI).

It belongs to the PsbZ family. PSII is composed of 1 copy each of membrane proteins PsbA, PsbB, PsbC, PsbD, PsbE, PsbF, PsbH, PsbI, PsbJ, PsbK, PsbL, PsbM, PsbT, PsbY, PsbZ, Psb30/Ycf12, at least 3 peripheral proteins of the oxygen-evolving complex and a large number of cofactors. It forms dimeric complexes.

The protein resides in the plastid. It localises to the chloroplast thylakoid membrane. In terms of biological role, may control the interaction of photosystem II (PSII) cores with the light-harvesting antenna, regulates electron flow through the 2 photosystem reaction centers. PSII is a light-driven water plastoquinone oxidoreductase, using light energy to abstract electrons from H(2)O, generating a proton gradient subsequently used for ATP formation. The chain is Photosystem II reaction center protein Z from Adiantum capillus-veneris (Maidenhair fern).